The sequence spans 255 residues: Ribonuclease HII (255 aa).

An RNase H type-2 domain is found at 70–255; the sequence is DLVAGIDEVG…FEPVPEFLIK (186 aa). 3 residues coordinate a divalent metal cation: Asp-76, Glu-77, and Asp-168.

It belongs to the RNase HII family. Requires Mn(2+) as cofactor. It depends on Mg(2+) as a cofactor.

Its subcellular location is the cytoplasm. The enzyme catalyses Endonucleolytic cleavage to 5'-phosphomonoester.. Endonuclease that specifically degrades the RNA of RNA-DNA hybrids. This is Ribonuclease HII from Pediococcus pentosaceus (strain ATCC 25745 / CCUG 21536 / LMG 10740 / 183-1w).